A 346-amino-acid polypeptide reads, in one-letter code: N-acetyl-gamma-glutamyl-phosphate reductase (346 aa).

Cys149 is a catalytic residue.

It belongs to the NAGSA dehydrogenase family. Type 1 subfamily.

The protein localises to the cytoplasm. The enzyme catalyses N-acetyl-L-glutamate 5-semialdehyde + phosphate + NADP(+) = N-acetyl-L-glutamyl 5-phosphate + NADPH + H(+). It participates in amino-acid biosynthesis; L-arginine biosynthesis; N(2)-acetyl-L-ornithine from L-glutamate: step 3/4. Catalyzes the NADPH-dependent reduction of N-acetyl-5-glutamyl phosphate to yield N-acetyl-L-glutamate 5-semialdehyde. This chain is N-acetyl-gamma-glutamyl-phosphate reductase, found in Geobacter metallireducens (strain ATCC 53774 / DSM 7210 / GS-15).